The sequence spans 141 residues: Lutropin subunit beta (141 aa).

A signal peptide spans 1–20; it reads MEMFQGLLLWLLLNTGGAWA. Disulfide bonds link Cys29-Cys77, Cys43-Cys92, Cys46-Cys130, Cys54-Cys108, Cys58-Cys110, and Cys113-Cys120. Residue Asn33 is glycosylated (N-linked (GlcNAc...) asparagine).

The protein belongs to the glycoprotein hormones subunit beta family. In terms of assembly, heterodimer of a common alpha chain and a unique beta chain which confers biological specificity to thyrotropin, lutropin, follitropin and gonadotropin.

The protein localises to the secreted. Its function is as follows. Promotes spermatogenesis and ovulation by stimulating the testes and ovaries to synthesize steroids. This chain is Lutropin subunit beta (LHB), found in Ailuropoda melanoleuca (Giant panda).